The chain runs to 470 residues: Acyltransferase BOA11 (470 aa).

The active-site Proton acceptor is H156.

This sequence belongs to the plant acyltransferase family.

It functions in the pathway polyketide biosynthesis. In terms of biological role, acyltransferase; part of the gene cluster B that mediates the biosynthesis of botcinic acid and its botcinin derivatives, acetate-derived polyketides that contribute to virulence when combined with the sesquiterpene botrydial. Botcinic acid and its derivatives have been shown to induce chlorosis and necrosis during host plant infection, but also have antifungal activities. Two polyketide synthases, BOA6 and BOA9, are involved in the biosynthesis of botcinins. BOA6 mediates the formation of the per-methylated tetraketide core by condensation of four units of malonyl-CoA with one unit of acetyl-CoA, which would be methylated in activated methylene groups to yield a bicyclic acid intermediate that could then either be converted to botrylactone derivatives or lose the starter acetate unit through a retro-Claisen type C-C bond cleavage to yield botcinin derivatives. The second polyketide synthase, BOA9, is probably required for the biosynthesis of the tetraketide side chain of botcinins. The methyltransferase (MT) domain within BOA6 is probably responsible for the incorporation of four methyl groups. The trans-enoyl reductase BOA5 might take over the enoyl reductase function of BOA6 that misses an ER domain. The monooxygenases BOA2, BOA3 and BOA4 might be involved in further hydroxylations at C4, C5 and C8, whereas BOA7, close to BOA9, could potentially be involved in the hydroxylation at C4 in the side chain of botcinins. This is Acyltransferase BOA11 from Botryotinia fuckeliana (strain B05.10) (Noble rot fungus).